Consider the following 164-residue polypeptide: Lipoprotein signal peptidase (164 aa).

The next 4 helical transmembrane spans lie at 6–26 (LGIL…LWLL), 39–59 (VTSF…GWFA), 65–85 (GQIL…IWMA), and 88–108 (TTKL…GNAI). Active-site residues include D118 and D140. The chain crosses the membrane as a helical span at residues 141 to 161 (VAIVVGVVALLYDSLIGAPAV).

It belongs to the peptidase A8 family.

The protein localises to the cell inner membrane. It carries out the reaction Release of signal peptides from bacterial membrane prolipoproteins. Hydrolyzes -Xaa-Yaa-Zaa-|-(S,diacylglyceryl)Cys-, in which Xaa is hydrophobic (preferably Leu), and Yaa (Ala or Ser) and Zaa (Gly or Ala) have small, neutral side chains.. The protein operates within protein modification; lipoprotein biosynthesis (signal peptide cleavage). Functionally, this protein specifically catalyzes the removal of signal peptides from prolipoproteins. This is Lipoprotein signal peptidase from Rhodopseudomonas palustris (strain TIE-1).